Reading from the N-terminus, the 94-residue chain is Cytochrome b-c1 complex subunit 8, mitochondrial (94 aa).

The Mitochondrial matrix portion of the chain corresponds to 2 to 49 (GPPSGKTYMGWWGHMGGPKQKGITSYAVSPYAQKPLQGIFHNAVFNSF). The chain crosses the membrane as a helical span at residues 50-80 (RRFKSQFLYVLIPAGIYWYWWKNGNEYNEFL). Topologically, residues 81 to 94 (YSKAGREELERVNV) are mitochondrial intermembrane.

Belongs to the UQCRQ/QCR8 family. In terms of assembly, component of the ubiquinol-cytochrome c oxidoreductase (cytochrome b-c1 complex, complex III, CIII), a multisubunit enzyme composed of 10 subunits. The complex is composed of 3 respiratory subunits cytochrome b (COB), cytochrome c1 (CYT1) and Rieske protein (RIP1), 2 core protein subunits COR1 and QCR2, and 5 low-molecular weight protein subunits QCR6, QCR7, QCR8, QCR9 and QCR10. The complex exists as an obligatory dimer and forms supercomplexes (SCs) in the inner mitochondrial membrane with a monomer or a dimer of cytochrome c oxidase (complex IV, CIV), resulting in 2 different assemblies (supercomplexes III(2)IV and III(2)IV(2)).

The protein resides in the mitochondrion inner membrane. Functionally, component of the ubiquinol-cytochrome c oxidoreductase, a multisubunit transmembrane complex that is part of the mitochondrial electron transport chain which drives oxidative phosphorylation. The respiratory chain contains 3 multisubunit complexes succinate dehydrogenase (complex II, CII), ubiquinol-cytochrome c oxidoreductase (cytochrome b-c1 complex, complex III, CIII) and cytochrome c oxidase (complex IV, CIV), that cooperate to transfer electrons derived from NADH and succinate to molecular oxygen, creating an electrochemical gradient over the inner membrane that drives transmembrane transport and the ATP synthase. The cytochrome b-c1 complex catalyzes electron transfer from ubiquinol to cytochrome c, linking this redox reaction to translocation of protons across the mitochondrial inner membrane, with protons being carried across the membrane as hydrogens on the quinol. In the process called Q cycle, 2 protons are consumed from the matrix, 4 protons are released into the intermembrane space and 2 electrons are passed to cytochrome c. This chain is Cytochrome b-c1 complex subunit 8, mitochondrial (QCR8), found in Saccharomyces cerevisiae (strain ATCC 204508 / S288c) (Baker's yeast).